The primary structure comprises 366 residues: tRNA-specific 2-thiouridylase MnmA (366 aa).

ATP contacts are provided by residues 6 to 13 (AMSGGVDS) and Leu32. Cys101 functions as the Nucleophile in the catalytic mechanism. Residues Cys101 and Cys199 are joined by a disulfide bond. Gly125 contributes to the ATP binding site. The interval 148–150 (KDQ) is interaction with tRNA. The active-site Cysteine persulfide intermediate is the Cys199.

Belongs to the MnmA/TRMU family.

Its subcellular location is the cytoplasm. It carries out the reaction S-sulfanyl-L-cysteinyl-[protein] + uridine(34) in tRNA + AH2 + ATP = 2-thiouridine(34) in tRNA + L-cysteinyl-[protein] + A + AMP + diphosphate + H(+). In terms of biological role, catalyzes the 2-thiolation of uridine at the wobble position (U34) of tRNA, leading to the formation of s(2)U34. The protein is tRNA-specific 2-thiouridylase MnmA of Leifsonia xyli subsp. xyli (strain CTCB07).